We begin with the raw amino-acid sequence, 757 residues long: Catalase-peroxidase 2 (757 aa).

An N-terminal signal peptide occupies residues 1–26 (MKHPLFNQKVLAGFVSMLLISGSAFA). A cross-link (tryptophyl-tyrosyl-methioninium (Trp-Tyr) (with M-274)) is located at residues 126 to 248 (WHSAGTYRTL…LGATHMGLIY (123 aa)). Catalysis depends on histidine 127, which acts as the Proton acceptor. A cross-link (tryptophyl-tyrosyl-methioninium (Tyr-Met) (with W-126)) is located at residues 248-274 (YVNPEGPKGVPDPLGSAKNIRVAFERM). Histidine 289 contributes to the heme b binding site.

Belongs to the peroxidase family. Peroxidase/catalase subfamily. In terms of assembly, homodimer or homotetramer. Heme b is required as a cofactor. Post-translationally, formation of the three residue Trp-Tyr-Met cross-link is important for the catalase, but not the peroxidase activity of the enzyme.

The catalysed reaction is H2O2 + AH2 = A + 2 H2O. It carries out the reaction 2 H2O2 = O2 + 2 H2O. Functionally, bifunctional enzyme with both catalase and broad-spectrum peroxidase activity. In Shewanella frigidimarina (strain NCIMB 400), this protein is Catalase-peroxidase 2.